Here is a 212-residue protein sequence, read N- to C-terminus: 2,3-bisphosphoglycerate-dependent phosphoglycerate mutase (212 aa).

Substrate is bound by residues 9–16 (RHGQSEWN), 22–23 (TG), Arg-61, 88–91 (ERDY), Lys-99, 115–116 (RR), and 159–160 (GN). His-10 (tele-phosphohistidine intermediate) is an active-site residue. Glu-88 (proton donor/acceptor) is an active-site residue.

It belongs to the phosphoglycerate mutase family. BPG-dependent PGAM subfamily. In terms of assembly, homodimer.

It catalyses the reaction (2R)-2-phosphoglycerate = (2R)-3-phosphoglycerate. Its pathway is carbohydrate degradation; glycolysis; pyruvate from D-glyceraldehyde 3-phosphate: step 3/5. Catalyzes the interconversion of 2-phosphoglycerate and 3-phosphoglycerate. This chain is 2,3-bisphosphoglycerate-dependent phosphoglycerate mutase, found in Methylobacterium radiotolerans (strain ATCC 27329 / DSM 1819 / JCM 2831 / NBRC 15690 / NCIMB 10815 / 0-1).